Reading from the N-terminus, the 315-residue chain is Alpha- and gamma-adaptin-binding protein p34 (315 aa).

The disordered stretch occupies residues 197 to 233 (IGSADPCHPEQPHLPAADRTESLSDHRGGASNTTDAQ). The span at 203–224 (CHPEQPHLPAADRTESLSDHRG) shows a compositional bias: basic and acidic residues. Phosphoserine occurs at positions 310 and 311.

Associated with AP-1 and AP-2 complexes.

The protein localises to the cytoplasm. It is found in the cytosol. Functionally, may be involved in endocytic recycling of growth factor receptors such as EGFR. This chain is Alpha- and gamma-adaptin-binding protein p34 (AAGAB), found in Pongo abelii (Sumatran orangutan).